A 1196-amino-acid polypeptide reads, in one-letter code: MNIDKALVLRTCANNMADHCGLIWPASGTVESKYWQSTRRHENGLVGLLWGAGTSAFLSVHADARWKVCEVAVADIIGLEEPGMVKFPRAEVVHVGDRISASHFISARQADPASTPTPTPTPMATPTPAAANIALPVVEQPSHEVFDVALVSAAAPSVNTLPVTTPQNLQTATYGSTLSGDNNSRLIAGYGSNETAGNHSDLIAGYGSTGTAGSDSSLVAGYGSTQTAGGDSALTAGYGSTQTAREGSNLTAGYGSTGTAGSDSSLIAGYGSTQTSGEDSSLTAGYGSTQTAQEGSNLTAGYGSTGTAGSDSSLIAGYGSTQTSGGDSSLTAGYGSTQTAQEGSNLTSGYGSTGTAGADSSLIAGYGSTQTSGSDSALTAGYGSTQTAQEGSNLTAGYGSTGTAGSDSSLIAGYGSTQTSGSDSSLTAGYGSTQTAQEGSNLTAGYGSTGTAGVDSSLIAGYGSTQTSGSDSALTAGYGSTQTAQEGSNLTAGYGSTGTAGADSSLIAGYGSTQTSGSESSLTAGYGSTQTAREGSTLTAGYGSTGTAGADSSLIAGYGSTQTSGSDSSLTAGYGSTQTAQQGSVLTSGYGSTQTAGAASNLTTGYGSTGTAGHESFIIAGYGSTQTAGHKSILTAGYGSTQTARDGSDLVAGYGSTGTAGSGSSLIAGYGSTQTASYKSMLTAGYGSTQTAREHSDLVAGYGSTSTAGSNSSLIAGYGSTQTAGFKSIMTAGYGSTQTAQERSDLVAGYGSTSTAGYSSSLIAGYGSTQTAGYGSTLTTGYGSTQTAQENSSLTTGYGSTSTAGYSSSLIAGYGSTQTAGYESTLTAGYGSTQTAQERSDLVTGYGSTSTAGYASSLIAGYGSTQTAGYESTLTAGYGSTQTAQENSSLTTGYGSTSTAGFASSLIAGYGSTQTAGYKSTLTAGYGSTQTAEYGSSLTAGYGSTATAGQDSSLIAGYGSTLTSGIRSFLTAGYGSTLIAGLRSVLIAGYGSSLTSGIRSTLTAGYGSNQIASYGSSLIAGHESIQVAGNKSMLIAGKGSSQTAGFRSTLIAGAGSVQLAGDRSRLIAGADSNQTAGDRSKLLAGNNSYLTAGDRSKLTGGHDCTLMAGDQSRLTAGKNSILTAGARSKLIGSEGSTLSAGEDSTLIFRLWDGKRYRQLVARTGENGVEADIPYYVNEDDDIVDKPDEDDDWIEVE.

The segment at 172 to 1147 (ATYGSTLSGD…LSAGEDSTLI (976 aa)) is octapeptide periodicity. Disordered stretches follow at residues 269–304 (GYGS…GYGS), 319–352 (GSTQ…GYGS), and 415–442 (GSTQ…GSNL). Polar residues-rich tracts occupy residues 271–298 (GSTQ…GSNL) and 319–346 (GSTQ…GSNL).

Belongs to the bacterial ice nucleation protein family. Membrane environment or aggregation seems to be required for ice nucleation activity.

It is found in the cell outer membrane. Ice nucleation proteins enable bacteria to nucleate crystallization in supercooled water. This is Ice nucleation protein (inaV) from Pseudomonas syringae.